The sequence spans 3677 residues: Dystrophin (3677 aa).

Positions 1–240 (MLWWEEVEDC…YITSLFQVLP (240 aa)) are actin-binding. Calponin-homology (CH) domains lie at 15–119 (DVQK…LHWQ) and 134–240 (TNSE…QVLP). Residues 63 to 72 (PKEKGSTRVH) are ANK2- and ANK-3 binding. Spectrin repeat units lie at residues 342–447 (LDSY…SNLH), 451–557 (MDLQ…LLQD), 560–668 (LKWQ…QISQ), 728–828 (DITE…NWLE), 831–935 (NNII…ELQT), 944–1046 (RYQE…KLEE), 1049–1154 (NKLR…EALK), 1163–1264 (LQKD…TLEE), 1268–1464 (CWHE…LFQK), 1469–1569 (EQRL…QLEK), 1573–1676 (LSRK…NLLL), 1680–1777 (KHME…TGKA), 1779–1875 (IPLK…KALE), 1878–1980 (HQWY…TLHE), 2001–2098 (YLTE…ERQG), 2106–2209 (KWRH…RVEE), 2215–2316 (SEFQ…GELE), 2317–2415 (VHIK…LRTK), 2465–2569 (ADFN…QLNE), 2576–2678 (QWLE…ALEE), 2682–2786 (LLQQ…KKSL), 2800–2922 (KRLH…RKID), and 2927–3032 (RLQE…QLHE). Residues 1416–1914 (SDLTSHEISL…PEPRDERKIK (499 aa)) form an interaction with SYNM region. One can recognise a WW domain in the interval 3047-3080 (TSVQGPWERAISPNKVPYYINHETQTTCWDHPKM). Residues 3050 to 3400 (QGPWERAISP…TVLEGDNMET (351 aa)) are interaction with SYNM. Residues 3300–3356 (KHQAKCNICKECPIIGFRYRSLKHFNYDICQSCFFSGRVAKGHKMHYPMVEYCTPTT) form a ZZ-type; degenerate zinc finger. Zn(2+)-binding residues include C3305, C3308, C3329, and C3332. The tract at residues 3458–3510 (DDEHLLIQHYCQSLNQDSPLSQPRSPAQILISLESEERGELERILADLEEENR) is binds to SNTB1. 3 positions are modified to phosphoserine: S3475, S3482, and S3492. Disordered regions lie at residues 3520 to 3546 (KQQHEHKGLSPLPSPPEMMPTSPQSPR) and 3595 to 3677 (EAKV…EDTM). Polar residues-rich tracts occupy residues 3599–3618 (NGTTVSSPSTSLQRSDSSQP) and 3654–3664 (QLNNSFPSSRG). S3604, S3605, S3609, S3615, S3616, and S3658 each carry phosphoserine.

In terms of assembly, interacts with SYNM. Interacts with the syntrophins SNTG1 and SNTG2. Interacts with KRT19. Component of the dystrophin-associated glycoprotein complex which is composed of three subcomplexes: a cytoplasmic complex comprised of DMD (or UTRN), DTNA and a number of syntrophins, such as SNTB1, SNTB2, SNTG1 and SNTG2, the transmembrane dystroglycan complex, and the sarcoglycan-sarcospan complex. Interacts with DAG1 (betaDAG1) with DMD; the interaction is inhibited by phosphorylation on the PPXY motif of DAG1. Interacts with SYNM; SNTA1 and SNTB1. Interacts with CMYA5. Directly interacts with ANK2 and ANK3; these interactions do not interfere with betaDAG1-binding and are necessary for proper localization in muscle cells. Identified in a dystroglycan complex that contains at least PRX, DRP2, UTRN, DMD and DAG1. Interacts with DTNB. Interacts with PGM5; the interaction is direct. Interacts with NOS1; localizes NOS1 to sarcolemma in muscle cells. In terms of tissue distribution, strongly expressed in skeletal muscle and weak expression observed in newborn brain which increases in adult brain.

The protein localises to the cell membrane. Its subcellular location is the sarcolemma. The protein resides in the cytoplasm. It is found in the cytoskeleton. It localises to the postsynaptic cell membrane. In terms of biological role, anchors the extracellular matrix to the cytoskeleton via F-actin. Ligand for dystroglycan. Component of the dystrophin-associated glycoprotein complex which accumulates at the neuromuscular junction (NMJ) and at a variety of synapses in the peripheral and central nervous systems and has a structural function in stabilizing the sarcolemma. Also implicated in signaling events and synaptic transmission. In Rattus norvegicus (Rat), this protein is Dystrophin (Dmd).